The following is a 249-amino-acid chain: Small ribosomal subunit protein eS6 (249 aa).

A Glycyl lysine isopeptide (Lys-Gly) (interchain with G-Cter in SUMO2) cross-link involves residue K14. E35 carries the post-translational modification ADP-ribosyl glutamic acid. R137 bears the (3R)-3-hydroxyarginine mark. S148 is modified (phosphoserine). K211 carries the N6-acetyllysine modification. Residues 217-229 are compositionally biased toward basic and acidic residues; it reads MKEAKEKRQEQIA. The segment at 217–249 is disordered; it reads MKEAKEKRQEQIAKRRRLSSLRASTSKSESSQK. Phosphoserine is present on residues S235, S236, S240, S242, S244, and S247. The segment covering 236-249 has biased composition (low complexity); it reads SLRASTSKSESSQK.

Belongs to the eukaryotic ribosomal protein eS6 family. As to quaternary structure, component of the small ribosomal subunit. Part of the small subunit (SSU) processome, composed of more than 70 proteins and the RNA chaperone small nucleolar RNA (snoRNA) U3. Ribosomal protein S6 is the major substrate of protein kinases in eukaryote ribosomes. The phosphorylation is stimulated by growth factors, tumor promoting agents, and mitogens. It is dephosphorylated at growth arrest. Phosphorylated at Ser-235 and Ser-236 by RPS6KA1 and RPS6KA3; phosphorylation at these sites facilitates the assembly of the pre-initiation complex. Post-translationally, specifically hydroxylated (with R stereochemistry) at C-3 of Arg-137 by KDM8. In terms of processing, mono-ADP-ribosylation at Glu-35 by PARP16 inhibits polysome assembly and mRNA loading, thereby inhibiting protein translation.

It is found in the cytoplasm. Its subcellular location is the nucleus. The protein localises to the nucleolus. Component of the 40S small ribosomal subunit. Plays an important role in controlling cell growth and proliferation through the selective translation of particular classes of mRNA. Part of the small subunit (SSU) processome, first precursor of the small eukaryotic ribosomal subunit. During the assembly of the SSU processome in the nucleolus, many ribosome biogenesis factors, an RNA chaperone and ribosomal proteins associate with the nascent pre-rRNA and work in concert to generate RNA folding, modifications, rearrangements and cleavage as well as targeted degradation of pre-ribosomal RNA by the RNA exosome. This is Small ribosomal subunit protein eS6 (RPS6) from Oryctolagus cuniculus (Rabbit).